The sequence spans 231 residues: Ribosomal RNA large subunit methyltransferase E (231 aa).

Residues Gly76, Trp78, Asp99, Asp115, and Asp139 each coordinate S-adenosyl-L-methionine. Lys179 acts as the Proton acceptor in catalysis.

This sequence belongs to the class I-like SAM-binding methyltransferase superfamily. RNA methyltransferase RlmE family.

It is found in the cytoplasm. It catalyses the reaction uridine(2552) in 23S rRNA + S-adenosyl-L-methionine = 2'-O-methyluridine(2552) in 23S rRNA + S-adenosyl-L-homocysteine + H(+). Specifically methylates the uridine in position 2552 of 23S rRNA at the 2'-O position of the ribose in the fully assembled 50S ribosomal subunit. This Bradyrhizobium sp. (strain BTAi1 / ATCC BAA-1182) protein is Ribosomal RNA large subunit methyltransferase E.